The following is a 266-amino-acid chain: PTS system mannose-specific EIIC component (266 aa).

Met1 is subject to N-formylmethionine. The Periplasmic portion of the chain corresponds to 1-4 (MEIT). Residues 1 to 237 (MEITTLQIVL…GVIGTVMAVL (237 aa)) form the PTS EIIC type-4 domain. The stretch at 5–43 (TLQIVLVFIVACIAGMGSILDEFQFHRPLIACTLVGIVL) is an intramembrane region. Residues 44–46 (GDM) are Periplasmic-facing. The stretch at 47–86 (KTGIIIGGTLEMIALGWMNIGAAVAPDAALASIISTILVI) is an intramembrane region. Over 87-90 (AGHQ) the chain is Periplasmic. The chain crosses the lipid bilayer at residues 91–124 (SIGAGIALAIPLAAAGQVLTIIVRTITVAFQHAA). The Cytoplasmic segment spans residues 125–132 (DKAADNGN). A transmembrane span lies at residues 133–160 (LTAISWIHVSSLFLQAMRVAIPAVIVAL). Topologically, residues 161-176 (SVGTSEVQNMLNAIPE) are periplasmic. A transmembrane span lies at residues 177-200 (VVTNGLNIAGGMIVVVGYAMVINM). Residues 201-207 (MRAGYLM) are Cytoplasmic-facing. At 208-218 (PFFYLGFVTAA) the chain is embedded in the membrane. At 219-224 (FTNFNL) the chain is on the periplasmic side. The segment at 225-242 (VALGVIGTVMAVLYIQLS) is a transmembrane helix. Residues 243–266 (PKYNRVAGAPAQAAGNNDLDNELD) lie on the Cytoplasmic side of the membrane.

Homotrimer of protomers that are composed of two subunits, IIC and IID.

It localises to the cell inner membrane. Functionally, the phosphoenolpyruvate-dependent sugar phosphotransferase system (sugar PTS), a major carbohydrate active transport system, catalyzes the phosphorylation of incoming sugar substrates concomitantly with their translocation across the cell membrane. The enzyme II ManXYZ PTS system is involved in mannose transport. This chain is PTS system mannose-specific EIIC component (manY), found in Escherichia coli O157:H7.